The primary structure comprises 308 residues: HTH-type transcriptional regulator YtlI (308 aa).

Positions 1–57 (MELRSIKTFHTIVKFGSFYKAAEILNYSQPTISMRMKQLEQDLGVLLFERGKSLQLT) constitute an HTH lysR-type domain. A DNA-binding region (H-T-H motif) is located at residues 18–37 (FYKAAEILNYSQPTISMRMK).

It belongs to the LysR transcriptional regulatory family.

Its function is as follows. Positively regulates the expression of ytmI operon in response to the availability of sulfur sources. The protein is HTH-type transcriptional regulator YtlI (ytlI) of Bacillus subtilis (strain 168).